Reading from the N-terminus, the 152-residue chain is Transcriptional regulator MraZ (152 aa).

SpoVT-AbrB domains follow at residues Ile5–Gln52 and Ala81–Leu124.

Belongs to the MraZ family. As to quaternary structure, forms oligomers.

Its subcellular location is the cytoplasm. The protein resides in the nucleoid. This chain is Transcriptional regulator MraZ, found in Legionella pneumophila (strain Paris).